Here is a 271-residue protein sequence, read N- to C-terminus: Aquaporin-1 (271 aa).

Residues 1–11 (MASEFKKKLFW) lie on the Cytoplasmic side of the membrane. A helical transmembrane segment spans residues 12–29 (RAVVAEFLAMILFIFISI). The Extracellular portion of the chain corresponds to 30 to 48 (GSALGFHYPIKSNQTTGAV). Asparagine 42 is a glycosylation site (N-linked (GlcNAc...) asparagine). A helical membrane pass occupies residues 49 to 67 (QDNVKVSLAFGLSIATLAQ). The Cytoplasmic segment spans residues 68–70 (SVG). An intramembrane segment occupies 71–84 (HISGAHLNPAVTLG). The NPA 1 signature appears at 78–80 (NPA). The Cytoplasmic portion of the chain corresponds to 85–92 (LLLSCQIS). The chain crosses the membrane as a helical span at residues 93-111 (VLRAIMYIIAQCVGAIVAT). Residues 112–135 (AILSGITSSLPDNSLGLNALAPGV) are Extracellular-facing. Residues 136-155 (NSGQGLGIEIIGTLQLVLCV) form a helical membrane-spanning segment. Residues 156-165 (LATTDRRRRD) lie on the Cytoplasmic side of the membrane. The chain crosses the membrane as a helical span at residues 166 to 183 (LGGSGPLAIGFSVALGHL). Residues 184–188 (LAIDY) lie on the Extracellular side of the membrane. An intramembrane segment occupies 189–201 (TGCGINPARSFGS). The NPA 2 signature appears at 194–196 (NPA). Topologically, residues 202-208 (SVITHNF) are extracellular. The helical transmembrane segment at 209–226 (QDHWIFWVGPFIGAALAV) threads the bilayer. At 227-271 (LIYDFILAPRSSDLTDRVKVWTSGQVEEYDLDADDINSRVEMKPK) the chain is on the cytoplasmic side. At serine 249 the chain carries Phosphoserine. A Phosphotyrosine modification is found at tyrosine 255. Serine 264 bears the Phosphoserine mark.

Belongs to the MIP/aquaporin (TC 1.A.8) family. Homotetramer; each monomer provides an independent water pore. Component of the ankyrin-1 complex in the erythrocyte, composed of ANK1, RHCE, RHAG, SLC4A1, EPB42, GYPA, GYPB and AQP1. Interacts with EPHB2; involved in endolymph production in the inner ear. Identified in a complex with STOM. Interacts (via the N-terminal) with ANK1 (via ANK 1-5 repeats). Interacts (via the C-terminal) with EPB42.

Its subcellular location is the cell membrane. The catalysed reaction is H2O(in) = H2O(out). It catalyses the reaction nitric oxide(out) = nitric oxide(in). It carries out the reaction CO2(out) = CO2(in). The enzyme catalyses glycerol(in) = glycerol(out). The catalysed reaction is H2O2(out) = H2O2(in). It catalyses the reaction K(+)(in) = K(+)(out). It carries out the reaction Na(+)(in) = Na(+)(out). Its function is as follows. Forms a water channel that facilitates the transport of water across cell membranes, playing a crucial role in water homeostasis in various tissues. Could also be permeable to small solutes including hydrogen peroxide, glycerol and gases such as amonnia (NH3), nitric oxide (NO) and carbon dioxide (CO2). Recruited to the ankyrin-1 complex, a multiprotein complex of the erythrocyte membrane, it could be part of a CO2 metabolon, linking facilitated diffusion of CO2 across the membrane, anion exchange of Cl(-)/HCO3(-) and interconversion of dissolved CO2 and carbonic acid in the cytosol. In vitro, it shows non-selective gated cation channel activity and may be permeable to cations like K(+) and Na(+) in vivo. The chain is Aquaporin-1 from Bos taurus (Bovine).